Here is a 286-residue protein sequence, read N- to C-terminus: Divergent deoxyribose-phosphate aldolase-like protein (286 aa).

Homodimer. Interacts with ADF; the interaction enhances ADF activity in disassembly of filamentous actin and inhibition of actin polymerization.

The protein resides in the cytoplasm. Involved in regulation of actin dynamics. This is Divergent deoxyribose-phosphate aldolase-like protein from Toxoplasma gondii.